The sequence spans 130 residues: General stress protein 13 (130 aa).

An S1 motif domain is found at 8–77; the sequence is GSVYTGKVTG…EKGKISLSIR (70 aa). Residues 76–109 are disordered; sequence IRATQAAPEKKESKPRKPKAAQVSEEASTPQGFN. The segment covering 100–109 has biased composition (polar residues); it reads EEASTPQGFN.

As to quaternary structure, found in association with the 30S subunit of the ribosome.

It is found in the cytoplasm. This Bacillus subtilis (strain 168) protein is General stress protein 13 (yugI).